The sequence spans 562 residues: Potassium-transporting ATPase potassium-binding subunit (562 aa).

12 consecutive transmembrane segments (helical) span residues 6 to 26 (FLLI…LGGF), 62 to 82 (YALA…VLLM), 132 to 152 (GLTV…FALI), 175 to 195 (LYVL…QGVL), 253 to 273 (FVQM…FGQV), 283 to 303 (LIWA…YAEL), 327 to 347 (FGIL…CGAV), 356 to 376 (ALGG…FGGV), 379 to 399 (GLYG…LMIG), 416 to 436 (MTAL…ALAL), 483 to 503 (LLLA…VLAI), and 526 to 546 (LFIG…FIPA).

This sequence belongs to the KdpA family. The system is composed of three essential subunits: KdpA, KdpB and KdpC.

The protein resides in the cell inner membrane. Part of the high-affinity ATP-driven potassium transport (or Kdp) system, which catalyzes the hydrolysis of ATP coupled with the electrogenic transport of potassium into the cytoplasm. This subunit binds the periplasmic potassium ions and delivers the ions to the membrane domain of KdpB through an intramembrane tunnel. This Yersinia pseudotuberculosis serotype IB (strain PB1/+) protein is Potassium-transporting ATPase potassium-binding subunit.